Consider the following 689-residue polypeptide: Transcription termination factor Rho (689 aa).

A compositionally biased stretch (polar residues) spans 1–20; that stretch reads MPRTPKNQNLEQNTQTQSLT. Disordered regions lie at residues 1–90 and 151–213; these read MPRT…KQPV and AQAQ…NRNN. Residues 52–65 are compositionally biased toward basic residues; the sequence is PKRRGRKPNPKTKA. Low complexity-rich tracts occupy residues 170-183 and 191-213; these read NAQQ…QNGE and NNQN…NRNN. The Rho RNA-BD domain occupies 287–362; it reads IIYTEGVLEV…RRIDRVNFEE (76 aa). ATP contacts are provided by residues 405 to 410, 417 to 422, and R448; these read GKGQRS and RTGKTV.

It belongs to the Rho family. In terms of assembly, homohexamer. The homohexamer assembles into an open ring structure.

In terms of biological role, facilitates transcription termination by a mechanism that involves Rho binding to the nascent RNA, activation of Rho's RNA-dependent ATPase activity, and release of the mRNA from the DNA template. The sequence is that of Transcription termination factor Rho from Fibrobacter succinogenes (strain ATCC 19169 / S85).